The primary structure comprises 508 residues: Glycerol kinase (508 aa).

Thr17 contributes to the ADP binding site. ATP-binding residues include Thr17, Thr18, and Ser19. Thr17 contributes to the sn-glycerol 3-phosphate binding site. Residue Arg21 coordinates ADP. Sn-glycerol 3-phosphate-binding residues include Arg87, Glu88, Tyr139, and Asp256. The glycerol site is built by Arg87, Glu88, Tyr139, Asp256, and Gln257. Residues Thr278 and Gly322 each contribute to the ADP site. Residues Thr278, Gly322, Gln326, and Ala423 each contribute to the ATP site. Positions 423 and 427 each coordinate ADP.

Belongs to the FGGY kinase family.

It carries out the reaction glycerol + ATP = sn-glycerol 3-phosphate + ADP + H(+). Its pathway is polyol metabolism; glycerol degradation via glycerol kinase pathway; sn-glycerol 3-phosphate from glycerol: step 1/1. Its activity is regulated as follows. Inhibited by fructose 1,6-bisphosphate (FBP). In terms of biological role, key enzyme in the regulation of glycerol uptake and metabolism. Catalyzes the phosphorylation of glycerol to yield sn-glycerol 3-phosphate. This is Glycerol kinase from Corynebacterium efficiens (strain DSM 44549 / YS-314 / AJ 12310 / JCM 11189 / NBRC 100395).